Consider the following 287-residue polypeptide: ATP synthase gamma chain (287 aa).

The protein belongs to the ATPase gamma chain family. As to quaternary structure, F-type ATPases have 2 components, CF(1) - the catalytic core - and CF(0) - the membrane proton channel. CF(1) has five subunits: alpha(3), beta(3), gamma(1), delta(1), epsilon(1). CF(0) has three main subunits: a, b and c.

It localises to the cell inner membrane. Functionally, produces ATP from ADP in the presence of a proton gradient across the membrane. The gamma chain is believed to be important in regulating ATPase activity and the flow of protons through the CF(0) complex. The polypeptide is ATP synthase gamma chain (Alkalilimnicola ehrlichii (strain ATCC BAA-1101 / DSM 17681 / MLHE-1)).